The chain runs to 259 residues: Probable ABC transporter permease protein RF_0080 (259 aa).

The next 5 membrane-spanning stretches (helical) occupy residues 13 to 35 (TIKF…SSII), 49 to 69 (LFIG…SGAV), 148 to 168 (VIAA…IGVM), 195 to 215 (PIDV…ISII), and 237 to 257 (AVVN…ELFF).

Belongs to the MlaE permease family.

The protein localises to the cell inner membrane. Its function is as follows. Could be part of an ABC transporter complex. This Rickettsia felis (strain ATCC VR-1525 / URRWXCal2) (Rickettsia azadi) protein is Probable ABC transporter permease protein RF_0080.